Here is a 181-residue protein sequence, read N- to C-terminus: Peptidyl-prolyl cis-trans isomerase H (181 aa).

Residues 17–180 (FFDITLGGES…QDVTIIQCGE (164 aa)) enclose the PPIase cyclophilin-type domain.

The protein belongs to the cyclophilin-type PPIase family. PPIase H subfamily.

The protein resides in the nucleus. The enzyme catalyses [protein]-peptidylproline (omega=180) = [protein]-peptidylproline (omega=0). PPIases accelerate the folding of proteins. It catalyzes the cis-trans isomerization of proline imidic peptide bonds in oligopeptides. The protein is Peptidyl-prolyl cis-trans isomerase H (cyp3) of Aspergillus oryzae (strain ATCC 42149 / RIB 40) (Yellow koji mold).